Reading from the N-terminus, the 464-residue chain is 3-isopropylmalate dehydratase large subunit (464 aa).

The [4Fe-4S] cluster site is built by cysteine 337, cysteine 397, and cysteine 400.

The protein belongs to the aconitase/IPM isomerase family. LeuC type 1 subfamily. As to quaternary structure, heterodimer of LeuC and LeuD. [4Fe-4S] cluster is required as a cofactor.

The catalysed reaction is (2R,3S)-3-isopropylmalate = (2S)-2-isopropylmalate. Its pathway is amino-acid biosynthesis; L-leucine biosynthesis; L-leucine from 3-methyl-2-oxobutanoate: step 2/4. Functionally, catalyzes the isomerization between 2-isopropylmalate and 3-isopropylmalate, via the formation of 2-isopropylmaleate. This Bacillus mycoides (strain KBAB4) (Bacillus weihenstephanensis) protein is 3-isopropylmalate dehydratase large subunit.